A 531-amino-acid polypeptide reads, in one-letter code: Tubulin-folding cofactor E (531 aa).

In terms of domain architecture, CAP-Gly spans 32 to 76 (GDVEGYSGTWIGVDWDQDGDGKHNGSVNGVFYFNGRSQSSASFVR). LRR repeat units follow at residues 84-109 (ITLLQALELRYRTISTKDEEDEMYVL), 159-183 (LPNLKLLDLTGNLISDWEEIGALCE), 185-213 (LPALTTLNLSCNSLSSDIKSLPQLKNIRV), 233-256 (LPGIEELHLMGNMISTITSTSSSD), 260-284 (FNSLRLLNLDDNCISDWSEVLKLSQ), 285-308 (LPCLEQLYLNKNKLSRIFQSVNGT), 318-342 (FPSLSCLLLGANNIGDLASVDALNG), 344-366 (PQLVDIRLSENPISDPVRGGVPR), and 474-497 (VGKLKILSENFFKLKSIKPRLFLQ).

It belongs to the TBCE family. As to quaternary structure, supercomplex made of cofactors A to E. Cofactors A and D function by capturing and stabilizing tubulin in a quasi-native conformation. Cofactor E binds to the cofactor D-tubulin complex; interaction with cofactor C then causes the release of tubulin polypeptides that are committed to the native state.

It localises to the cytoplasm. Functionally, essential tubulin-folding protein involved in the tubulin folding pathway. Not essential for cell viability. Probably involved in the binding of alpha-tubulin in the multimeric supercomplex. This chain is Tubulin-folding cofactor E (TFCE), found in Arabidopsis thaliana (Mouse-ear cress).